The primary structure comprises 475 residues: Cytochrome c-552 (475 aa).

Positions 1-29 (MSIKHWMSAPIAVATLFASQLLLAGSVLA) are cleaved as a signal peptide. A disordered region spans residues 38–57 (PRNDAFEQKHPDQYHSWKAT). Position 92 (histidine 92) interacts with heme c. Heme is bound by residues cysteine 120, cysteine 123, and lysine 124. Heme c is bound by residues cysteine 158, cysteine 161, histidine 162, cysteine 207, cysteine 210, and histidine 211. 4 residues coordinate Ca(2+): glutamate 213, tyrosine 214, lysine 259, and glutamine 261. Position 214 (tyrosine 214) interacts with substrate. Position 262 (histidine 262) interacts with substrate. 9 residues coordinate heme c: histidine 273, cysteine 280, cysteine 283, histidine 284, histidine 299, cysteine 312, cysteine 315, histidine 316, and histidine 391.

This sequence belongs to the cytochrome c-552 family. It depends on Ca(2+) as a cofactor. Heme c serves as cofactor.

It is found in the periplasm. It catalyses the reaction 6 Fe(III)-[cytochrome c] + NH4(+) + 2 H2O = 6 Fe(II)-[cytochrome c] + nitrite + 8 H(+). It participates in nitrogen metabolism; nitrate reduction (assimilation). Functionally, catalyzes the reduction of nitrite to ammonia, consuming six electrons in the process. This is Cytochrome c-552 from Vibrio parahaemolyticus serotype O3:K6 (strain RIMD 2210633).